The following is a 118-amino-acid chain: uncharacterized protein (118 aa).

2 helical membrane-spanning segments follow: residues 7–27 and 34–58; these read VIVK…FIIE and VFVA…AIIF.

It is found in the membrane. This is an uncharacterized protein from Saccharomyces cerevisiae (strain ATCC 204508 / S288c) (Baker's yeast).